Reading from the N-terminus, the 477-residue chain is C3a anaphylatoxin chemotactic receptor (477 aa).

The Extracellular segment spans residues 1-23 (MESFDADTNSTDLHSRPLFQPQD). A glycan (N-linked (GlcNAc...) asparagine) is linked at N9. Residues 24 to 46 (IASMVILGLTCLLGLLGNGLVLW) traverse the membrane as a helical segment. At 47–57 (VAGVKMKTTVN) the chain is on the cytoplasmic side. Residues 58–80 (TVWFLHLTLADFLCCLSLPFSLA) traverse the membrane as a helical segment. Over 81–96 (HLILQGHWPYGLFLCK) the chain is Extracellular. A disulfide bridge connects residues C95 and C172. A helical membrane pass occupies residues 97 to 118 (LIPSIIILNMFASVFLLTAISL). Residues 119–139 (DRCLIVHKPIWCQNHRNVRTA) lie on the Cytoplasmic side of the membrane. Residues 140–160 (FAICGCVWVVAFVMCVPVFVY) form a helical membrane-spanning segment. Residues 161 to 333 (RDLFIMDNRS…TPLMAITITR (173 aa)) lie on the Extracellular side of the membrane. N168 is a glycosylation site (N-linked (GlcNAc...) asparagine). Residues Y174 and Y184 each carry the sulfotyrosine modification. N197 and N201 each carry an N-linked (GlcNAc...) asparagine glycan. Position 312 is a sulfotyrosine (Y312). A helical membrane pass occupies residues 334–353 (LVVGFLVPFFIMVICYSLIV). Residues 354–370 (FRMRKTNFTKSRNKTFR) lie on the Cytoplasmic side of the membrane. A helical membrane pass occupies residues 371 to 393 (VAVAVVTVFFICWTPYHLVGVLL). At 394–410 (LITDPESSLGEAVMSWD) the chain is on the extracellular side. The chain crosses the membrane as a helical span at residues 411-431 (HMSIALASANSCFNPFLYALL). Residues 432–477 (GKDFRKKARQSIKGILEAAFSEELTHSTNCTQDKASSKRNNMSTDV) lie on the Cytoplasmic side of the membrane. S452 carries the phosphoserine modification. Position 456 is a phosphothreonine (T456).

It belongs to the G-protein coupled receptor 1 family. Interacts with VGF-derived peptide TLQP-21. Detected in varying levels in all tissues examined except the spleen. Especially abundant in heart and lung.

The protein localises to the cell membrane. Receptor for the chemotactic and inflammatory peptide anaphylatoxin C3a. This receptor stimulates chemotaxis, granule enzyme release and superoxide anion production. The protein is C3a anaphylatoxin chemotactic receptor (C3ar1) of Mus musculus (Mouse).